The following is a 276-amino-acid chain: Mitochondrial distribution and morphology protein 12 (276 aa).

An SMP-LTD domain is found at 1 to 276 (MSIDIQWNLL…FVWPSYFTLY (276 aa)). The disordered stretch occupies residues 68 to 104 (TLYSDDSSSLDDEESDREEENMTELPPYGATENGVHK). Residues 75–89 (SSLDDEESDREEENM) show a composition bias toward acidic residues.

The protein belongs to the MDM12 family. In terms of assembly, component of the ER-mitochondria encounter structure (ERMES) or MDM complex, composed of mmm1, mdm10, mdm12 and mdm34. A mmm1 homodimer associates with one molecule of mdm12 on each side in a pairwise head-to-tail manner, and the SMP-LTD domains of mmm1 and mdm12 generate a continuous hydrophobic tunnel for phospholipid trafficking.

Its subcellular location is the mitochondrion outer membrane. It is found in the endoplasmic reticulum membrane. Functionally, component of the ERMES/MDM complex, which serves as a molecular tether to connect the endoplasmic reticulum (ER) and mitochondria. Components of this complex are involved in the control of mitochondrial shape and protein biogenesis, and function in nonvesicular lipid trafficking between the ER and mitochondria. Mdm12 is required for the interaction of the ER-resident membrane protein mmm1 and the outer mitochondrial membrane-resident beta-barrel protein mdm10. The mdm12-mmm1 subcomplex functions in the major beta-barrel assembly pathway that is responsible for biogenesis of all mitochondrial outer membrane beta-barrel proteins, and acts in a late step after the SAM complex. The mdm10-mdm12-mmm1 subcomplex further acts in the TOM40-specific pathway after the action of the mdm12-mmm1 complex. Essential for establishing and maintaining the structure of mitochondria and maintenance of mtDNA nucleoids. The chain is Mitochondrial distribution and morphology protein 12 from Schizosaccharomyces japonicus (strain yFS275 / FY16936) (Fission yeast).